Reading from the N-terminus, the 291-residue chain is Lectin (291 aa).

The signal sequence occupies residues M1–S28. Position 118 (D118) interacts with Ca(2+). R138 is a binding site for a carbohydrate. The propeptide at N147 to N162 is removed in mature form. Mn(2+) contacts are provided by E170 and D172. Ca(2+) contacts are provided by D172, Y174, N176, and D181. Y174 serves as a coordination point for a carbohydrate. Mn(2+) contacts are provided by D181 and H186. K208 serves as a coordination point for Ca(2+). S228 contacts a carbohydrate. Residues Q281 to V291 constitute a propeptide, removed in mature form.

Belongs to the leguminous lectin family. Post-translationally, the mature chain consists of residues 163-280 followed by residues 29-147. Concanavalin A-like lectins of the Diocleinae subtribe undergo proteolytic processing referred to as circular permutation. The propeptide is split into an N-terminal and a C-terminal part, the gamma and beta chain, respectively. These are then religated in beta-gamma order to form the mature alpha chain. The beta and gamma chains can often be detected in cell extracts.

Its function is as follows. D-mannose-binding lectin that also binds alpha-methyl-D-mannoside with even higher affinity. Has hemagglutinating activity against rabbit erythrocytes. Shows toxicity against the brine shrimp A.nauplii. Induces reversible paw edema and hypernociceptivity in rats. The polypeptide is Lectin (Dioclea lasiophylla).